The following is a 99-amino-acid chain: uncharacterized protein (99 aa).

Residues 1 to 17 (MMMNAFFPAMALMVLVG) form the signal peptide. Residue Cys-18 is the site of N-palmitoyl cysteine attachment. Cys-18 carries S-diacylglycerol cysteine lipidation.

The protein resides in the cell membrane. This is an uncharacterized protein from Shigella flexneri.